We begin with the raw amino-acid sequence, 133 residues long: Histone H2A.1 (133 aa).

A disordered region spans residues 1–23 (MSTTGKGGKAKGKTASSKQVSRS). S2 is modified (N-acetylserine). An N6-acetyllysine mark is found at K6, K9, K11, K13, and K18. S123 is subject to Phosphoserine. Residue K124 forms a Glycyl lysine isopeptide (Lys-Gly) (interchain with G-Cter in ubiquitin) linkage. S129 bears the Phosphoserine mark.

This sequence belongs to the histone H2A family. In terms of assembly, the nucleosome is a histone octamer containing two molecules each of H2A, H2B, H3 and H4 assembled in one H3-H4 heterotetramer and two H2A-H2B heterodimers. The octamer wraps approximately 147 bp of DNA. Post-translationally, monoubiquitination of Lys-124 gives a specific tag for epigenetic transcriptional repression. Acetylation occurs almost exclusively in the MAC.

The protein resides in the nucleus. The protein localises to the chromosome. Its function is as follows. Core component of nucleosome. Nucleosomes wrap and compact DNA into chromatin, limiting DNA accessibility to the cellular machineries which require DNA as a template. Histones thereby play a central role in transcription regulation, DNA repair, DNA replication and chromosomal stability. DNA accessibility is regulated via a complex set of post-translational modifications of histones, also called histone code, and nucleosome remodeling. This Tetrahymena pyriformis protein is Histone H2A.1 (HTA2).